We begin with the raw amino-acid sequence, 180 residues long: Large ribosomal subunit protein bL17 (180 aa).

The tract at residues 134–180 (AQAKAKKAAAMPTEESEAKPAEEGDVVGASEPDAKAPEEPPAEAPEN) is disordered.

It belongs to the bacterial ribosomal protein bL17 family. As to quaternary structure, part of the 50S ribosomal subunit. Contacts protein L32.

In Mycobacterium tuberculosis (strain ATCC 25177 / H37Ra), this protein is Large ribosomal subunit protein bL17.